The chain runs to 461 residues: Glycine--tRNA ligase (461 aa).

Arg100 and Glu174 together coordinate substrate. ATP-binding positions include 206–208 (RNE), 216–221 (FRTREF), 290–291 (EL), and 334–337 (GVDR). A substrate-binding site is contributed by 221 to 225 (FEQME). A substrate-binding site is contributed by 330 to 334 (EPSVG).

It belongs to the class-II aminoacyl-tRNA synthetase family. In terms of assembly, homodimer.

It localises to the cytoplasm. It carries out the reaction tRNA(Gly) + glycine + ATP = glycyl-tRNA(Gly) + AMP + diphosphate. Catalyzes the attachment of glycine to tRNA(Gly). The sequence is that of Glycine--tRNA ligase from Caldanaerobacter subterraneus subsp. tengcongensis (strain DSM 15242 / JCM 11007 / NBRC 100824 / MB4) (Thermoanaerobacter tengcongensis).